A 227-amino-acid chain; its full sequence is UPF0173 metal-dependent hydrolase BCG9842_B0515 (227 aa).

It belongs to the UPF0173 family.

In Bacillus cereus (strain G9842), this protein is UPF0173 metal-dependent hydrolase BCG9842_B0515.